The sequence spans 210 residues: Molybdenum cofactor guanylyltransferase (210 aa).

GTP contacts are provided by residues 14 to 16, K27, N55, D73, and D108; that span reads LAG. Residue D108 participates in Mg(2+) binding.

Belongs to the MobA family. As to quaternary structure, monomer. It depends on Mg(2+) as a cofactor.

It localises to the cytoplasm. It catalyses the reaction Mo-molybdopterin + GTP + H(+) = Mo-molybdopterin guanine dinucleotide + diphosphate. Its function is as follows. Transfers a GMP moiety from GTP to Mo-molybdopterin (Mo-MPT) cofactor (Moco or molybdenum cofactor) to form Mo-molybdopterin guanine dinucleotide (Mo-MGD) cofactor. The chain is Molybdenum cofactor guanylyltransferase from Rhodopseudomonas palustris (strain BisB5).